We begin with the raw amino-acid sequence, 160 residues long: Nucleotide-binding protein VP1617 (160 aa).

This sequence belongs to the YajQ family.

Nucleotide-binding protein. This is Nucleotide-binding protein VP1617 from Vibrio parahaemolyticus serotype O3:K6 (strain RIMD 2210633).